The chain runs to 140 residues: Nucleoside diphosphate kinase (140 aa).

ATP-binding residues include lysine 11, phenylalanine 59, arginine 87, threonine 93, arginine 104, and asparagine 114. Histidine 117 functions as the Pros-phosphohistidine intermediate in the catalytic mechanism.

Belongs to the NDK family. As to quaternary structure, homotetramer. It depends on Mg(2+) as a cofactor.

The protein resides in the cytoplasm. The enzyme catalyses a 2'-deoxyribonucleoside 5'-diphosphate + ATP = a 2'-deoxyribonucleoside 5'-triphosphate + ADP. It carries out the reaction a ribonucleoside 5'-diphosphate + ATP = a ribonucleoside 5'-triphosphate + ADP. In terms of biological role, major role in the synthesis of nucleoside triphosphates other than ATP. The ATP gamma phosphate is transferred to the NDP beta phosphate via a ping-pong mechanism, using a phosphorylated active-site intermediate. The protein is Nucleoside diphosphate kinase of Rhizobium johnstonii (strain DSM 114642 / LMG 32736 / 3841) (Rhizobium leguminosarum bv. viciae).